The sequence spans 455 residues: tRNA modification GTPase MnmE (455 aa).

(6S)-5-formyl-5,6,7,8-tetrahydrofolate is bound by residues Arg24, Glu86, and Arg125. Positions 220–376 (GLTVAIIGRP…LETAILETVQ (157 aa)) constitute a TrmE-type G domain. Residue Asn230 coordinates K(+). GTP contacts are provided by residues 230–235 (NVGKSS), 249–255 (TDLPGTT), and 274–277 (DTAG). Mg(2+) is bound at residue Ser234. K(+) is bound by residues Thr249, Leu251, and Thr254. Thr255 contacts Mg(2+). Lys455 provides a ligand contact to (6S)-5-formyl-5,6,7,8-tetrahydrofolate.

Belongs to the TRAFAC class TrmE-Era-EngA-EngB-Septin-like GTPase superfamily. TrmE GTPase family. As to quaternary structure, homodimer. Heterotetramer of two MnmE and two MnmG subunits. K(+) is required as a cofactor.

Its subcellular location is the cytoplasm. Functionally, exhibits a very high intrinsic GTPase hydrolysis rate. Involved in the addition of a carboxymethylaminomethyl (cmnm) group at the wobble position (U34) of certain tRNAs, forming tRNA-cmnm(5)s(2)U34. The chain is tRNA modification GTPase MnmE from Acaryochloris marina (strain MBIC 11017).